A 233-amino-acid chain; its full sequence is MKEEIAATVVFLTMLVKKHKQLSKQKIEKFAAKLTTLLFAKYKTHWYAENPTKGQAFRCIRINECQALDAVLEKACTESNVDFNELGLPKEMTIWVDPFEVCCRYGEKNDPFTIASFKGKDGYNAPKRISNAVEKATSDYHSGTSSDEEPTNKEPKTIPKVSNPNSIYQCADYTQAIPSWSQYPRRKNYQNDGYPHQPMPYYPQQKPYKAFRRSASTFSGPRVDRYHWVNMKR.

Positions 135–165 are disordered; the sequence is KATSDYHSGTSSDEEPTNKEPKTIPKVSNPN.

It belongs to the BTG family.

The sequence is that of Maternal B9.15 protein from Xenopus laevis (African clawed frog).